An 837-amino-acid polypeptide reads, in one-letter code: Dapper homolog 2 (837 aa).

Residues 65 to 113 (ENVSKEELRLEATLSLLKQQLTRLRRQDVGLKTHLQQLDQQITELKLDV) are a coiled coil. Disordered stretches follow at residues 189 to 265 (ADES…PKYQ), 424 to 497 (HGKH…DKSS), 512 to 564 (GSQR…KQSG), 600 to 649 (QQIP…HTQR), and 738 to 782 (EMSD…EDEG). Polar residues-rich tracts occupy residues 246–265 (VKSSTPCSSPQNPSVDPKYQ) and 432–445 (LDLQKNNFPINNTA). Composition is skewed to basic and acidic residues over residues 456 to 466 (ASEKRSGHFPK), 486 to 496 (EGSRASCHDKS), and 548 to 560 (LSREFCTKNRTDL). Positions 741-759 (DYTTNRFGDSESSQGSQTA) are enriched in polar residues. The segment covering 768–782 (LDEEDLLEEEEEDEG) has biased composition (acidic residues). A PDZ-binding motif is present at residues 834 to 837 (MTLV).

It belongs to the dapper family. In terms of assembly, interacts with dvl2.

The protein resides in the cytoplasm. It localises to the late endosome. Its subcellular location is the nucleus. The protein localises to the cell membrane. Functionally, involved in regulation of intracellular signaling pathways during development. Specifically thought to play a role in canonical and/or non-canonical Wnt signaling pathways through interaction with DSH (Dishevelled) family proteins. Positive regulator of the Wnt signaling pathway which acts downstream of wnt1 indicative for non-canonical Wnt signaling. Also negatively regulates the Nodal signaling pathway, possibly by promoting the lysosomal degradation of Nodal receptors. Required for convergent extension movements in gastrulation. This chain is Dapper homolog 2 (dact2), found in Danio rerio (Zebrafish).